Reading from the N-terminus, the 107-residue chain is Essential MCU regulator, mitochondrial (107 aa).

Residues 1 to 47 constitute a mitochondrion transit peptide; the sequence is MASGAARWLALVRVGSGASRSWLSLRKGGDVSAGRSCSGQSLVPTRS. The Mitochondrial matrix portion of the chain corresponds to 48-65; the sequence is VIVTRSGAILPKPVKMSF. The chain crosses the membrane as a helical span at residues 66-85; sequence GLLRVFSIVIPFLYVGTLIS. A GXXXX[G/A/S] motif is present at residues 81–85; the sequence is GTLIS. The Mitochondrial intermembrane portion of the chain corresponds to 86-107; that stretch reads KNFAALLEEHDIFVPEDDDDDD.

It belongs to the SMDT1/EMRE family. As to quaternary structure, component of the uniplex complex, composed of MCU, EMRE/SMDT1, MICU1 and MICU2 (or MICU3) in a 4:4:1:1 stoichiometry. The number of EMRE/SMDT1 molecules is hovewer variable, ranging from 1 to 4 copies per uniplex complex, leading to uniplex complexes with distinct gatekeeping profiles. Interacts (via its C-terminal poly-Asp tail) with MCUR1; the interaction is direct. Unprocessed form interacts (via transit peptide) with MAIP1. In terms of processing, undergoes proteolytic degradation in neurons: degraded by AFG3L2 and SPG7 before SMDT1/EMRE assembly with the uniporter complex, limiting the availability of SMDT1/EMRE for MCU assembly and promoting efficient assembly of gatekeeper subunits with MCU.

It localises to the mitochondrion inner membrane. In terms of biological role, essential regulatory subunit of the mitochondrial calcium uniporter complex (uniplex), a complex that mediates calcium uptake into mitochondria. Required to bridge the calcium-sensing proteins MICU1 with the calcium-conducting subunit MCU. Acts by mediating activation of MCU and retention of MICU1 to the MCU pore, in order to ensure tight regulation of the uniplex complex and appropriate responses to intracellular calcium signaling. The polypeptide is Essential MCU regulator, mitochondrial (Bos taurus (Bovine)).